A 115-amino-acid chain; its full sequence is UPF0597 protein NTHI1023 (115 aa).

This sequence belongs to the UPF0597 family.

The chain is UPF0597 protein NTHI1023 from Haemophilus influenzae (strain 86-028NP).